The chain runs to 266 residues: DNA-directed RNA polymerase subunit Rpo3 (266 aa).

Residues cysteine 205, cysteine 208, and cysteine 211 each contribute to the [3Fe-4S] cluster site.

The protein belongs to the archaeal Rpo3/eukaryotic RPB3 RNA polymerase subunit family. As to quaternary structure, part of the RNA polymerase complex. [3Fe-4S] cluster is required as a cofactor.

It localises to the cytoplasm. It carries out the reaction RNA(n) + a ribonucleoside 5'-triphosphate = RNA(n+1) + diphosphate. Functionally, DNA-dependent RNA polymerase (RNAP) catalyzes the transcription of DNA into RNA using the four ribonucleoside triphosphates as substrates. The chain is DNA-directed RNA polymerase subunit Rpo3 from Methanosarcina mazei (strain ATCC BAA-159 / DSM 3647 / Goe1 / Go1 / JCM 11833 / OCM 88) (Methanosarcina frisia).